The primary structure comprises 123 residues: Small ribosomal subunit protein bS6 (123 aa).

The tract at residues methionine 102–glutamate 123 is disordered. Residues lysine 104 to glutamate 123 show a composition bias toward basic and acidic residues.

The protein belongs to the bacterial ribosomal protein bS6 family.

In terms of biological role, binds together with bS18 to 16S ribosomal RNA. The protein is Small ribosomal subunit protein bS6 of Vibrio vulnificus (strain CMCP6).